A 158-amino-acid polypeptide reads, in one-letter code: Glycosyl-phosphatidylinositol-anchored molecule-like protein (158 aa).

A signal peptide spans 1–17 (MLLFALLLAMELPLVAA). A UPAR/Ly6 domain is found at 29–134 (LRCHDCAVIN…DEVTEEELPE (106 aa)). Intrachain disulfides connect Cys31–Cys55, Cys34–Cys42, Cys48–Cys73, Cys77–Cys104, and Cys105–Cys110.

Its subcellular location is the cell membrane. Functionally, may play a role in the apoptotic pathway or cell-cycle regulation induced by p53/TP53 after DNA damage. The polypeptide is Glycosyl-phosphatidylinositol-anchored molecule-like protein (GML) (Homo sapiens (Human)).